The sequence spans 3302 residues: Xin actin-binding repeat-containing protein 2 (3302 aa).

The interval 166 to 204 (NDSEETLKPSSAMGTSSYTSARQSKETSTSSYSNHSLTS) is disordered. Positions 173-187 (KPSSAMGTSSYTSAR) are enriched in polar residues. Residues 191 to 204 (ETSTSSYSNHSLTS) show a composition bias toward low complexity. 7 Xin repeats span residues 306 to 321 (AGVQ…TNDS), 341 to 356 (GEVQ…QPLD), 381 to 396 (GDVK…QPID), 418 to 433 (GDVC…RPLD), 456 to 471 (GDVK…QQLD), 496 to 511 (GNVK…QPLY), and 534 to 549 (GDVR…QPLD). Ser-565 bears the Phosphoserine mark. 2 Xin repeats span residues 572-587 (GEVG…QPLE) and 606-621 (IDVS…QPLD). Residue Ser-633 is modified to Phosphoserine. Xin repeat units lie at residues 640-655 (GDVK…LPIE), 677-692 (GDVK…QRLE), 713-728 (GHVK…NNLI), 744-759 (GTVE…TPLY), and 782-797 (GDVR…RPID). Phosphoserine is present on Ser-813. 11 Xin repeats span residues 820–835 (GNVK…QPLD), 859–874 (GDVK…QPME), 892–907 (GDVR…QPLD), 930–945 (GDVR…ENLD), 965–980 (GDVS…QSLD), 1004–1019 (GNVL…QPID), 1040–1055 (GDVR…FSLD), 1077–1092 (GDVK…QPLY), 1115–1130 (GDVR…KPLD), 1152–1167 (GDVS…QPLD), and 1186–1201 (GNVQ…EGGD). At Ser-1210 the chain carries Phosphoserine. 3 Xin repeats span residues 1217 to 1232 (GNVK…HSID), 1254 to 1269 (GDVK…QTLD), and 1289 to 1304 (SDVK…TPIH). Ser-1573 carries the post-translational modification Phosphoserine. Disordered stretches follow at residues 1848-1882 (VSAS…VDKT), 1920-1939 (AETQ…NPAG), 1957-2002 (EKQN…APDK), 2039-2296 (YPDC…KPYM), 2311-2378 (RQQR…SKAV), 2546-2593 (YAAK…ESRV), and 2626-2687 (NFQQ…RESQ). Basic and acidic residues predominate over residues 1859–1873 (KTKESENVRESKDDV). Thr-1930 is subject to Phosphothreonine. Ser-1935 bears the Phosphoserine mark. Over residues 1957–1969 (EKQNSNKDMRKND) the composition is skewed to basic and acidic residues. Composition is skewed to pro residues over residues 2051 to 2062 (LPPPSPPPPPPS) and 2125 to 2134 (SLPPPPPTAP). Residues 2135-2145 (SQPAHLLSSSV) show a composition bias toward low complexity. Ser-2158 is subject to Phosphoserine. Positions 2158 to 2167 (SRKETLDSHQ) are enriched in basic and acidic residues. The tract at residues 2181 to 2186 (PPTLPK) is interacts with NEBL. 3 positions are modified to phosphoserine: Ser-2198, Ser-2211, and Ser-2252. A compositionally biased stretch (basic and acidic residues) spans 2205–2243 (ELERSLSDVEIKTTLSKDQKSSLVAESREHTEAKQEVFR). 2 stretches are compositionally biased toward polar residues: residues 2251–2263 (LSIS…SQTV) and 2282–2292 (SFPSGSEQQSP). Residues 2303-2328 (LMIAEEKYRQQREELEKQRRESSCHS) adopt a coiled-coil conformation. Composition is skewed to basic and acidic residues over residues 2311–2325 (RQQR…RESS) and 2333–2350 (ETQH…ELQK). Over residues 2626–2635 (NFQQTQTQTS) the composition is skewed to polar residues. The segment covering 2636-2659 (RIEHKELSQPYSEKKCLRDKDKQQ) has biased composition (basic and acidic residues). The span at 2674–2685 (TQKQSSFSSVRE) shows a compositional bias: polar residues. Coiled-coil stretches lie at residues 2696 to 2724 (NILE…SNKS) and 2751 to 2777 (RVAM…EMLV). Positions 2835–2934 (RQVATHSEAA…PSPPRSRSEQ (100 aa)) are disordered. 2 stretches are compositionally biased toward polar residues: residues 2836–2850 (QVAT…NPAK) and 2891–2903 (KSEL…NNSC). Positions 2907–2916 (LPRRPMEHTS) are enriched in basic and acidic residues. 2 positions are modified to phosphoserine: Ser-2987 and Ser-3225. The tract at residues 3278 to 3302 (QGNLHNLSKDGLSNGVPRSRPAEFS) is disordered.

Belongs to the Xin family. Interacts with ACTN2. Interacts with F-actin. Interacts with NEBL (via SH3 domain). Interacts with Kcna5/Kv1.5 and Scn5a/Nav1.5; the interactions are required for normal action potential configuration in the heart.

The protein resides in the cell junction. Protects actin filaments from depolymerization. Required for correct morphology of cell membranes and maturation of intercalated disks of cardiomyocytes via facilitating localization of XIRP1 and CDH2 to the termini of aligned mature cardiomyocytes. Thereby required for correct postnatal heart development and growth regulation that is crucial for overall heart morphology and diastolic function. Required for normal electrical conduction in the heart including formation of the infranodal ventricular conduction system and normal action potential configuration, as a result of its interaction with the cardiac ion channel components Scn5a/Nav1.5 and Kcna5/Kv1.5. Required for regular actin filament spacing of the paracrystalline array in both inner and outer hair cells of the cochlea, thereby required for maintenance of stereocilia morphology. This Rattus norvegicus (Rat) protein is Xin actin-binding repeat-containing protein 2.